Reading from the N-terminus, the 153-residue chain is SsrA-binding protein (153 aa).

It belongs to the SmpB family.

The protein resides in the cytoplasm. Its function is as follows. Required for rescue of stalled ribosomes mediated by trans-translation. Binds to transfer-messenger RNA (tmRNA), required for stable association of tmRNA with ribosomes. tmRNA and SmpB together mimic tRNA shape, replacing the anticodon stem-loop with SmpB. tmRNA is encoded by the ssrA gene; the 2 termini fold to resemble tRNA(Ala) and it encodes a 'tag peptide', a short internal open reading frame. During trans-translation Ala-aminoacylated tmRNA acts like a tRNA, entering the A-site of stalled ribosomes, displacing the stalled mRNA. The ribosome then switches to translate the ORF on the tmRNA; the nascent peptide is terminated with the 'tag peptide' encoded by the tmRNA and targeted for degradation. The ribosome is freed to recommence translation, which seems to be the essential function of trans-translation. This is SsrA-binding protein from Pelotomaculum thermopropionicum (strain DSM 13744 / JCM 10971 / SI).